Consider the following 1146-residue polypeptide: Sodium/hydrogen exchanger 7 (1146 aa).

The Extracellular segment spans residues 1 to 28 (MTTVIDATMAYRFLEEATDSSSSSSSSK). A helical transmembrane segment spans residues 29-49 (LESSPVDAVLFVGMSLVLGIA). Residues 50–58 (SRHLLRGTR) are Cytoplasmic-facing. Residues 59 to 79 (VPYTVALLVIGIALGSLEYGA) traverse the membrane as a helical segment. The Extracellular segment spans residues 80-99 (KHNLGKIGHGIRIWNEIDPE). Residues 100–120 (LLLAVFLPALLFESSFSMEVH) traverse the membrane as a helical segment. At 121–127 (QIKRCLG) the chain is on the cytoplasmic side. Residues 128–148 (QMVLLAVPGVLISTACLGSLV) form a helical membrane-spanning segment. The Extracellular portion of the chain corresponds to 149–159 (KVTFPYEWDWK). The chain crosses the membrane as a helical span at residues 160–180 (TSLLLGGLLSATDPVAVVALL). At 181–191 (KELGASKKLST) the chain is on the cytoplasmic side. A helical transmembrane segment spans residues 192–212 (IIEGESLMNDGTAIVVFQLFL). Residues 213–227 (KMAMGQNSDWSSIIK) are Extracellular-facing. The helical transmembrane segment at 228 to 250 (FLLKVALGAVGIGLAFGIASVIW) threads the bilayer. Over 251-253 (LKF) the chain is Cytoplasmic. Residues 254–273 (IFNDTVIEITLTIAVSYFAY) form a helical membrane-spanning segment. The Extracellular segment spans residues 274 to 278 (YTAQE). Residues 279–299 (WAGASGVLTVMTLGMFYAAFA) traverse the membrane as a helical segment. At 300–313 (RTAFKGDSQKSLHH) the chain is on the cytoplasmic side. The helical transmembrane segment at 314–334 (FWEMVAYIANTLIFILSGVVI) threads the bilayer. The Extracellular segment spans residues 335–352 (AEGILDSDKIAYQGNSWR). Residues 353–373 (FLFLLYVYIQLSRVVVVGVLY) form a helical membrane-spanning segment. Residues 374–387 (PLLCRFGYGLDWKE) lie on the Cytoplasmic side of the membrane. The chain crosses the membrane as a helical span at residues 388–408 (SIILVWSGLRGAVALALSLSV). Topologically, residues 409–420 (KQSSGNSHISKE) are extracellular. The chain crosses the membrane as a helical span at residues 421–441 (TGTLFLFFTGGIVFLTLIVNG). The Cytoplasmic portion of the chain corresponds to 442–1146 (STTQFVLRLL…PSKIVFRNDL (705 aa)). 2 disordered regions span residues 981–1001 (LHRRPSSLTPPRSSSSDQLQR) and 1102–1128 (CQLPLKGESSTRQNTMVESSDEEDEDE). The span at 986–996 (SSLTPPRSSSS) shows a compositional bias: low complexity. The span at 1109–1118 (ESSTRQNTMV) shows a compositional bias: polar residues.

This sequence belongs to the monovalent cation:proton antiporter 1 (CPA1) transporter (TC 2.A.36) family. In terms of assembly, interacts with CIPK24/SOS2 and CBL4/SOS3. In terms of processing, phosphorylated by CIPK24/SOS2 in complex with CBL4/SOS3. As to expression, more expressed in roots than in shoots. Mostly localized in parenchyma cells at the xylem/symplast boundary in roots, hypocotyls, stems and leaves. Also present in root tips epidermal cells.

It is found in the cell membrane. The catalysed reaction is Na(+)(in) + H(+)(out) = Na(+)(out) + H(+)(in). The enzyme catalyses K(+)(in) + H(+)(out) = K(+)(out) + H(+)(in). In terms of biological role, acts in electroneutral exchange of protons for cations such as Na(+) or Li(+) across plasma membrane. Involved in Na(+) and K(+) homeostasis. Required for cytoplasmic Na(+) and Li(+) detoxification by secreting them from the cytoplasm to the extracellular space. Regulates Na(+) content of the xylem sap. This chain is Sodium/hydrogen exchanger 7 (NHX7), found in Arabidopsis thaliana (Mouse-ear cress).